Reading from the N-terminus, the 300-residue chain is uncharacterized protein (300 aa).

A divalent metal cation-binding residues include Glu146, Glu148, and Asp177.

The protein belongs to the FAH family.

This is an uncharacterized protein from Staphylococcus aureus (strain MW2).